Reading from the N-terminus, the 459-residue chain is Tubulin gamma chain (459 aa).

142-148 (AGGTGSG) serves as a coordination point for GTP. Residues 440 to 459 (ADYLTKETAPTDEAEDKRAG) are disordered.

Belongs to the tubulin family.

The protein resides in the cytoplasm. It localises to the cytoskeleton. The protein localises to the microtubule organizing center. Its subcellular location is the spindle pole body. Functionally, tubulin is the major constituent of microtubules. The gamma chain is found at microtubule organizing centers (MTOC) such as the spindle poles or the centrosome, suggesting that it is involved in the minus-end nucleation of microtubule assembly. The chain is Tubulin gamma chain (TUB4) from Cochliobolus heterostrophus (strain C5 / ATCC 48332 / race O) (Southern corn leaf blight fungus).